A 1904-amino-acid polypeptide reads, in one-letter code: Pericentriolar material 1 protein (1904 aa).

Disordered stretches follow at residues 1 to 135 (MATG…SGEP), 159 to 179 (QEDG…PQQE), 265 to 303 (HDSQ…QSDE), 338 to 361 (NSSF…TSAA), 376 to 407 (NSLA…EKLQ), 430 to 489 (SDMM…GTNN), and 520 to 559 (CHNR…LGDV). A compositionally biased stretch (basic and acidic residues) spans 43-60 (RSSEKNKKKLGGEAETRL). The segment covering 107 to 118 (INFSDLDQINTN) has biased composition (polar residues). A coiled-coil region spans residues 171-212 (SQARDPQQEAKEELENLKKQHDLLKRMLQQQEQLKALQGRQA). Residues 280–298 (ESLSLTREISQSRNSSVSE) are compositionally biased toward polar residues. A coiled-coil region spans residues 301–334 (SDEKAQLFNKMRMLQGKKQKMDKLLGELHTLRDQ). Low complexity predominate over residues 338-348 (NSSFFPASSSP). Residues 349–361 (QRSIDQRSTTSAA) are compositionally biased toward polar residues. Residues 403 to 429 (TEKLQKLNEVRKRLNELRELVHYYEQT) are a coiled coil. The span at 442-452 (KEEEETEDSGS) shows a compositional bias: acidic residues. Residues 461–470 (PVTNIRNPQG) show a composition bias toward polar residues. Residues 471–482 (ISSWSEINSNSN) show a composition bias toward low complexity. Basic and acidic residues predominate over residues 520 to 534 (CHNREDDKHADLPHG). Residues 535 to 544 (EDDEVEEDRA) are compositionally biased toward acidic residues. Coiled coils occupy residues 562 to 592 (DAEF…VQDD) and 636 to 686 (LNEK…LQSA). The interval 686–706 (AGLGNSPANRQTSPATSTPAM) is disordered. A compositionally biased stretch (polar residues) spans 687 to 706 (GLGNSPANRQTSPATSTPAM). The stretch at 731 to 768 (SEMRRHEILREELRRRRKQLEALMAEHQRRRELAETIS) forms a coiled coil. Residues 773-840 (SVKSEGSEAQ…PSMNDSFSAY (68 aa)) are disordered. Residues 779–804 (SEAQRTPQQSRTENRTMATWGGSTQC) are compositionally biased toward polar residues. Acidic residues predominate over residues 806–830 (LDEEDGDEDGYLSDGLDQAEEEEDA). Coiled-coil stretches lie at residues 895–927 (SELS…CQTL) and 970–1000 (TQLS…CQEK). Disordered regions lie at residues 991–1018 (HQQE…SPVF), 1063–1082 (GFPQ…ASGK), and 1088–1225 (FPKP…TGYD). Polar residues-rich tracts occupy residues 1064–1073 (FPQSSEQQQH) and 1093–1102 (ESSSSTGAEN). The segment covering 1103–1117 (QRSHRQPEDEVEKRS) has biased composition (basic and acidic residues). A compositionally biased stretch (polar residues) spans 1141–1150 (SVQSIASGHK). A compositionally biased stretch (basic and acidic residues) spans 1151-1162 (NQSDTSRRRNFD). Positions 1173–1182 (PDPVDPTTVT) are enriched in low complexity. Residues 1421–1447 (IHLDQALARMREYERMKIEAESTLDSE) adopt a coiled-coil conformation. Residues 1616 to 1625 (AKEDKDETET) are compositionally biased toward basic and acidic residues. Disordered regions lie at residues 1616-1741 (AKED…VKGE), 1774-1838 (MKTE…SDED), and 1865-1904 (EAQT…AQSA). Over residues 1649–1658 (SDQEEDEESE) the composition is skewed to acidic residues. The span at 1668–1678 (KAETQALTNYG) shows a compositional bias: polar residues. The segment covering 1680–1695 (GEDENEDEEIEFEEGP) has biased composition (acidic residues). 3 stretches are compositionally biased toward polar residues: residues 1698–1720 (VQTS…SQEL), 1728–1737 (ILSSEQQSVN), and 1779–1791 (SSSS…TQML). Residues 1800 to 1812 (SSAGSSESSMAGS) show a composition bias toward low complexity. Residues 1881-1897 (EQDRELVGDAQTLKEPE) show a composition bias toward basic and acidic residues.

Belongs to the PCM1 family. In terms of assembly, self-associates.

It is found in the cytoplasm. The protein resides in the cytoskeleton. The protein localises to the microtubule organizing center. It localises to the centrosome. Its subcellular location is the cytoplasmic granule. It is found in the centriolar satellite. The protein resides in the cilium basal body. Its function is as follows. Required for centrosome assembly and function. Essential for the correct localization of several centrosomal proteins including CETN3 and PCNT. Required to anchor microtubules to the centrosome. Probably involved in the biogenesis of cilia. The polypeptide is Pericentriolar material 1 protein (PCM1) (Gallus gallus (Chicken)).